Here is a 181-residue protein sequence, read N- to C-terminus: MHIVQPIRSLEKIQEVKQYLLNKNKRDYFLFIFGINSALRISDILPLQVKDVQNKDHLWATESKTKKKRKILILESLKQEIYEYTKDMKENEYLFKSVRTRKPISRIQAYRILREAAAACGLEEIGTHTLRKTFGYHFYQRTKDIAELQRILNHSSPSITMRYIGIDEDTTRAAYKVFGGL.

Residues 3–176 (IVQPIRSLEK…DEDTTRAAYK (174 aa)) form the Tyr recombinase domain. Catalysis depends on residues arginine 40, lysine 64, histidine 128, arginine 131, and histidine 154. Tyrosine 163 serves as the catalytic O-(3'-phospho-DNA)-tyrosine intermediate.

The protein belongs to the 'phage' integrase family.

This chain is Probable integrase/recombinase YoeC (yoeC), found in Bacillus subtilis (strain 168).